Consider the following 1212-residue polypeptide: Myosin-1 (1212 aa).

The tract at residues 1–35 (MGITRRGKDKAAAGQAVAGGASGGRARPKKATFET) is disordered. The region spanning 41 to 715 (VGVSDLTLLS…TLFALEHMRD (675 aa)) is the Myosin motor domain. 134 to 141 (GESGAGKT) is a binding site for ATP. An actin-binding region spans residues 405–487 (SVGILDIYGF…PGVFSALKDA (83 aa)). IQ domains lie at 719–739 (HNMATRIQRMWRAYLAYRAES) and 740–765 (ATRIQTFWRKKRTGAEYLQLRDHGHR). The 190-residue stretch at 773-962 (RRRMSILGSR…AVHTQQGEPP (190 aa)) folds into the TH1 domain. Disordered stretches follow at residues 947 to 1064 (DFYK…APPA) and 1115 to 1212 (PAAY…DDDW). Residues 954–966 (VHTQQGEPPNSVS) are compositionally biased toward polar residues. Composition is skewed to low complexity over residues 987-998 (RPGGPNGRPARG) and 1008-1052 (PGGA…ASVR). Residues 1053–1062 (APPPPPPAAP) are compositionally biased toward pro residues. Positions 1065–1124 (KAKIMAKVLYDFAGQKENEMSIKEGDLIEIVQKENNGWWLAKSGNQQAWVPAAYVEEQKQ) constitute an SH3 domain. The span at 1125-1140 (APPPVAASRPPPPAPP) shows a compositional bias: pro residues. Over residues 1171–1190 (MSLNGSDGSRSNTPTPSLGN) the composition is skewed to polar residues.

This sequence belongs to the TRAFAC class myosin-kinesin ATPase superfamily. Myosin family.

Its subcellular location is the cytoplasm. It is found in the cytoskeleton. The protein localises to the actin patch. In terms of biological role, type-I myosin implicated in the organization of the actin cytoskeleton. Required for proper actin cytoskeleton polarization. At the cell cortex, assembles in patch-like structures together with proteins from the actin-polymerizing machinery and promotes actin assembly. Functions as actin nucleation-promoting factor (NPF) for the Arp2/3 complex. The protein is Myosin-1 (MYO1) of Pyricularia oryzae (strain 70-15 / ATCC MYA-4617 / FGSC 8958) (Rice blast fungus).